Reading from the N-terminus, the 802-residue chain is Oligophrenin-1 (802 aa).

Positions 265–368 (QPTIEGYLYT…WMEAMDGKEP (104 aa)) constitute a PH domain. Residues 380-564 (MELNEVGFKF…ILIEHFGKIY (185 aa)) enclose the Rho-GAP domain. Disordered regions lie at residues 569 to 589 (EESA…HKPI), 607 to 770 (LDES…NAGE), and 783 to 802 (FETA…GDES). The segment covering 616–627 (HQTPNGTITSSI) has biased composition (polar residues). A compositionally biased stretch (basic and acidic residues) spans 716-732 (HHKEGDADSFSKVRPPG).

As to quaternary structure, interacts with HOMER1. Interacts with AMPA receptor complexes. Interacts with SH3GL2 (endophilin-A1). Interacts (via C-terminus) with NR1D1.

It is found in the postsynapse. The protein resides in the presynapse. It localises to the cell projection. Its subcellular location is the axon. The protein localises to the dendritic spine. It is found in the dendrite. The protein resides in the cytoplasm. In terms of biological role, stimulates GTP hydrolysis of members of the Rho family. Its action on RHOA activity and signaling is implicated in growth and stabilization of dendritic spines, and therefore in synaptic function. Critical for the stabilization of AMPA receptors at postsynaptic sites. Critical for the regulation of synaptic vesicle endocytosis at pre-synaptic terminals. Required for the localization of NR1D1 to dendrites, can suppress its repressor activity and protect it from proteasomal degradation. This chain is Oligophrenin-1 (OPHN1), found in Pan troglodytes (Chimpanzee).